A 199-amino-acid chain; its full sequence is Rho-related protein racG (199 aa).

GTP contacts are provided by Ala-13, Gly-15, Lys-16, Thr-17, Cys-18, Tyr-32, and Thr-35. Mg(2+) is bound at residue Thr-17. 2 short sequence motifs (switch) span residues 26–37 and 57–75; these read NAFPNEYIPTVF and DTAG…YPST. Thr-35 provides a ligand contact to Mg(2+). Residues Lys-116, Asp-118, and Ala-159 each coordinate GTP. Cys-196 carries the post-translational modification Cysteine methyl ester. The S-geranylgeranyl cysteine moiety is linked to residue Cys-196. A propeptide spans 197–199 (removed in mature form); the sequence is SLF.

This sequence belongs to the small GTPase superfamily. Rho family. Mg(2+) serves as cofactor.

It is found in the cell membrane. Its subcellular location is the cytoplasm. The protein resides in the cytoskeleton. The catalysed reaction is GTP + H2O = GDP + phosphate + H(+). Its activity is regulated as follows. Regulated by guanine nucleotide exchange factors (GEFs) which promote the exchange of bound GDP for free GTP, GTPase activating proteins (GAPs) which increase the GTP hydrolysis activity, and GDP dissociation inhibitors which inhibit the dissociation of the nucleotide from the GTPase. In terms of biological role, small GTPase which cycles between active GTP-bound and inactive GDP-bound states. Involved in actin cytoskeleton remodeling during capping of surface receptors and uroid formation. The polypeptide is Rho-related protein racG (Entamoeba histolytica (strain ATCC 30459 / HM-1:IMSS / ABRM)).